The sequence spans 63 residues: Potassium channel toxin Sp4 (63 aa).

The first 20 residues, 1-20 (MNKVHFALFLLVLTVLAVSG), serve as a signal peptide directing secretion. 3 cysteine pairs are disulfide-bonded: cysteine 31–cysteine 53, cysteine 38–cysteine 58, and cysteine 42–cysteine 60.

Belongs to the long chain scorpion toxin family. Class 2 subfamily. In terms of tissue distribution, expressed by the venom gland.

The protein localises to the secreted. Functionally, this recombinant toxin selectively inhibits mouse voltage-gated potassium channel Kv1.3/KCNA3 (IC(50)=24.73 nM). The polypeptide is Potassium channel toxin Sp4 (Scorpiops pococki (Scorpion)).